The chain runs to 242 residues: uncharacterized protein (242 aa).

It localises to the cytoplasm. Its subcellular location is the nucleus. This is an uncharacterized protein from Schizosaccharomyces pombe (strain 972 / ATCC 24843) (Fission yeast).